Reading from the N-terminus, the 906-residue chain is Alanine--tRNA ligase (906 aa).

The Zn(2+) site is built by His570, His574, Cys674, and His678.

This sequence belongs to the class-II aminoacyl-tRNA synthetase family. It depends on Zn(2+) as a cofactor.

The protein resides in the cytoplasm. It carries out the reaction tRNA(Ala) + L-alanine + ATP = L-alanyl-tRNA(Ala) + AMP + diphosphate. Functionally, catalyzes the attachment of alanine to tRNA(Ala) in a two-step reaction: alanine is first activated by ATP to form Ala-AMP and then transferred to the acceptor end of tRNA(Ala). Also edits incorrectly charged Ser-tRNA(Ala) and Gly-tRNA(Ala) via its editing domain. In Ureaplasma parvum serovar 3 (strain ATCC 27815 / 27 / NCTC 11736), this protein is Alanine--tRNA ligase.